A 490-amino-acid polypeptide reads, in one-letter code: GTPase Der (490 aa).

EngA-type G domains follow at residues 3–166 and 203–376; these read PVVA…MDDV and IKLA…DSST. Residues 9–16, 56–60, 118–121, 209–216, 256–260, and 321–324 contribute to the GTP site; these read GRPNVGKS, DTGGI, NKTD, DTAGV, and NKWD. The 85-residue stretch at 377–461 folds into the KH-like domain; sequence RRVSTAMLTR…PIRIQFKEGE (85 aa).

Belongs to the TRAFAC class TrmE-Era-EngA-EngB-Septin-like GTPase superfamily. EngA (Der) GTPase family. Associates with the 50S ribosomal subunit.

GTPase that plays an essential role in the late steps of ribosome biogenesis. The chain is GTPase Der from Salmonella choleraesuis (strain SC-B67).